Here is a 201-residue protein sequence, read N- to C-terminus: DNA polymerase epsilon subunit C (201 aa).

Disordered regions lie at residues 102-165 (KKRE…KSTR) and 178-201 (SALD…STDP). The span at 117-144 (VVIEEPELHEDDGVEEEEEEDEVSEEEE) shows a compositional bias: acidic residues. Composition is skewed to basic and acidic residues over residues 145–164 (PVHN…DKST) and 182–201 (VGEH…STDP). A phosphoserine mark is found at Ser186, Ser188, and Ser189.

In terms of assembly, DNA polymerase epsilon is a heterotetramer consisting of POL2, DPB2, DPB3 and DPB4.

It is found in the nucleus. Functionally, as accessory component of the DNA polymerase epsilon (DNA polymerase II) participates in chromosomal DNA replication. It is required during synthesis of the leading and lagging DNA strands at the replication fork and binds at/or near replication origins and moves along DNA with the replication fork. It has 3'-5' proofreading exonuclease activity that correct errors arising during DNA replication. It is also involved in DNA synthesis during DNA repair. This chain is DNA polymerase epsilon subunit C (DPB3), found in Saccharomyces cerevisiae (strain ATCC 204508 / S288c) (Baker's yeast).